A 288-amino-acid polypeptide reads, in one-letter code: Release factor glutamine methyltransferase (288 aa).

S-adenosyl-L-methionine contacts are provided by residues 123 to 127 (GTGSG), Asp-146, and Asn-190. Substrate is bound at residue 190-193 (NPPY).

Belongs to the protein N5-glutamine methyltransferase family. PrmC subfamily.

It carries out the reaction L-glutaminyl-[peptide chain release factor] + S-adenosyl-L-methionine = N(5)-methyl-L-glutaminyl-[peptide chain release factor] + S-adenosyl-L-homocysteine + H(+). Functionally, methylates the class 1 translation termination release factors RF1/PrfA and RF2/PrfB on the glutamine residue of the universally conserved GGQ motif. The chain is Release factor glutamine methyltransferase from Bacillus subtilis (strain 168).